The following is a 134-amino-acid chain: Large ribosomal subunit protein eL28 (134 aa).

The residue at position 60 (S60) is a Phosphoserine.

This sequence belongs to the eukaryotic ribosomal protein eL28 family. In terms of assembly, component of the large ribosomal subunit (LSU). Mature yeast ribosomes consist of a small (40S) and a large (60S) subunit. The 40S small subunit contains 1 molecule of ribosomal RNA (18S rRNA) and at least 33 different proteins. The large 60S subunit contains 3 rRNA molecules (25S, 5.8S and 5S rRNA) and at least 46 different proteins.

The protein resides in the cytoplasm. Its function is as follows. Component of the ribosome, a large ribonucleoprotein complex responsible for the synthesis of proteins in the cell. The small ribosomal subunit (SSU) binds messenger RNAs (mRNAs) and translates the encoded message by selecting cognate aminoacyl-transfer RNA (tRNA) molecules. The large subunit (LSU) contains the ribosomal catalytic site termed the peptidyl transferase center (PTC), which catalyzes the formation of peptide bonds, thereby polymerizing the amino acids delivered by tRNAs into a polypeptide chain. The nascent polypeptides leave the ribosome through a tunnel in the LSU and interact with protein factors that function in enzymatic processing, targeting, and the membrane insertion of nascent chains at the exit of the ribosomal tunnel. In Schizosaccharomyces pombe (strain 972 / ATCC 24843) (Fission yeast), this protein is Large ribosomal subunit protein eL28 (rpl44).